The sequence spans 40 residues: Photosystem II reaction center protein J (40 aa).

The helical transmembrane segment at 8 to 28 threads the bilayer; it reads IPLWLIGTVAGIPVIGSVGVF.

Belongs to the PsbJ family. As to quaternary structure, PSII is composed of 1 copy each of membrane proteins PsbA, PsbB, PsbC, PsbD, PsbE, PsbF, PsbH, PsbI, PsbJ, PsbK, PsbL, PsbM, PsbT, PsbX, PsbY, PsbZ, Psb30/Ycf12, at least 3 peripheral proteins of the oxygen-evolving complex and a large number of cofactors. It forms dimeric complexes.

The protein localises to the plastid. The protein resides in the chloroplast thylakoid membrane. Functionally, one of the components of the core complex of photosystem II (PSII). PSII is a light-driven water:plastoquinone oxidoreductase that uses light energy to abstract electrons from H(2)O, generating O(2) and a proton gradient subsequently used for ATP formation. It consists of a core antenna complex that captures photons, and an electron transfer chain that converts photonic excitation into a charge separation. The protein is Photosystem II reaction center protein J of Acorus calamus (Sweet flag).